The following is a 237-amino-acid chain: Leucyl/phenylalanyl-tRNA--protein transferase (237 aa).

The protein belongs to the L/F-transferase family.

Its subcellular location is the cytoplasm. It catalyses the reaction N-terminal L-lysyl-[protein] + L-leucyl-tRNA(Leu) = N-terminal L-leucyl-L-lysyl-[protein] + tRNA(Leu) + H(+). It carries out the reaction N-terminal L-arginyl-[protein] + L-leucyl-tRNA(Leu) = N-terminal L-leucyl-L-arginyl-[protein] + tRNA(Leu) + H(+). The enzyme catalyses L-phenylalanyl-tRNA(Phe) + an N-terminal L-alpha-aminoacyl-[protein] = an N-terminal L-phenylalanyl-L-alpha-aminoacyl-[protein] + tRNA(Phe). Functionally, functions in the N-end rule pathway of protein degradation where it conjugates Leu, Phe and, less efficiently, Met from aminoacyl-tRNAs to the N-termini of proteins containing an N-terminal arginine or lysine. The sequence is that of Leucyl/phenylalanyl-tRNA--protein transferase from Aromatoleum aromaticum (strain DSM 19018 / LMG 30748 / EbN1) (Azoarcus sp. (strain EbN1)).